Here is a 296-residue protein sequence, read N- to C-terminus: NADH-ubiquinone oxidoreductase chain 2 (296 aa).

The next 8 helical transmembrane spans lie at 5–25 (LCLF…GLWL), 49–69 (YFLI…NQSF), 71–91 (FLIP…MWLV), 114–134 (LLGL…SAFI), 167–187 (FFLM…AVIL), 209–229 (ASIS…GFFI), 242–262 (LLVL…FSIA), and 276–296 (KMEI…LFFL).

This sequence belongs to the complex I subunit 2 family.

Its subcellular location is the mitochondrion inner membrane. It catalyses the reaction a ubiquinone + NADH + 5 H(+)(in) = a ubiquinol + NAD(+) + 4 H(+)(out). Core subunit of the mitochondrial membrane respiratory chain NADH dehydrogenase (Complex I) that is believed to belong to the minimal assembly required for catalysis. Complex I functions in the transfer of electrons from NADH to the respiratory chain. The immediate electron acceptor for the enzyme is believed to be ubiquinone. In Artemia franciscana (Brine shrimp), this protein is NADH-ubiquinone oxidoreductase chain 2 (ND2).